The sequence spans 327 residues: Glycerol-3-phosphate dehydrogenase [NAD(P)+] (327 aa).

The NADPH site is built by Ser-10, Phe-11, Arg-31, and Lys-108. The sn-glycerol 3-phosphate site is built by Lys-108, Gly-136, and Ser-138. Ala-140 is an NADPH binding site. The sn-glycerol 3-phosphate site is built by Lys-191, Asp-246, Ser-256, Arg-257, and Asn-258. Lys-191 (proton acceptor) is an active-site residue. An NADPH-binding site is contributed by Arg-257. NADPH-binding residues include Leu-281 and Glu-283.

It belongs to the NAD-dependent glycerol-3-phosphate dehydrogenase family.

The protein localises to the cytoplasm. The enzyme catalyses sn-glycerol 3-phosphate + NAD(+) = dihydroxyacetone phosphate + NADH + H(+). It carries out the reaction sn-glycerol 3-phosphate + NADP(+) = dihydroxyacetone phosphate + NADPH + H(+). Its pathway is membrane lipid metabolism; glycerophospholipid metabolism. Catalyzes the reduction of the glycolytic intermediate dihydroxyacetone phosphate (DHAP) to sn-glycerol 3-phosphate (G3P), the key precursor for phospholipid synthesis. In Ehrlichia ruminantium (strain Welgevonden), this protein is Glycerol-3-phosphate dehydrogenase [NAD(P)+].